An 827-amino-acid chain; its full sequence is Protein arginine N-methyltransferase 9 (827 aa).

TPR repeat units follow at residues 54-87 (QYSLFKWAEELYALNRSQDLFNCYEQALELFPID) and 88-121 (DVICNSMGEHLFRLGFRDEAAGYFYKALKLNPSS). SAM-dependent MTase PRMT-type domains follow at residues 124–453 (AKEN…YLRL) and 511–827 (NAVY…RPLQ).

The protein belongs to the class I-like SAM-binding methyltransferase superfamily. Protein arginine N-methyltransferase family.

Its subcellular location is the cytoplasm. The enzyme catalyses L-arginyl-[protein] + 2 S-adenosyl-L-methionine = N(omega),N(omega)'-dimethyl-L-arginyl-[protein] + 2 S-adenosyl-L-homocysteine + 2 H(+). Its function is as follows. Arginine methyltransferase that can both catalyze the formation of omega-N monomethylarginine (MMA) and symmetrical dimethylarginine (sDMA). This is Protein arginine N-methyltransferase 9 (prmt9) from Xenopus laevis (African clawed frog).